A 78-amino-acid polypeptide reads, in one-letter code: Short neurotoxin OH-5 (78 aa).

A signal peptide spans Met-1 to Thr-21. 4 disulfide bridges follow: Cys-24–Cys-40, Cys-33–Cys-58, Cys-62–Cys-70, and Cys-71–Cys-76.

It belongs to the three-finger toxin family. Short-chain subfamily. As to expression, expressed by the venom gland.

It localises to the secreted. In terms of biological role, this three-finger toxin binds and inhibits the nicotinic acetylcholine receptor (nAChR). The chain is Short neurotoxin OH-5 from Ophiophagus hannah (King cobra).